The sequence spans 362 residues: tRNA-specific 2-thiouridylase MnmA 1 (362 aa).

ATP-binding positions include 12 to 19 and methionine 38; that span reads GMSGGVDS. Cysteine 104 (nucleophile) is an active-site residue. A disulfide bridge connects residues cysteine 104 and cysteine 200. Glycine 128 is a binding site for ATP. Residues 150-152 are interaction with tRNA; sequence KDQ. Cysteine 200 functions as the Cysteine persulfide intermediate in the catalytic mechanism. An interaction with tRNA region spans residues 306 to 307; the sequence is RY.

This sequence belongs to the MnmA/TRMU family.

It localises to the cytoplasm. The enzyme catalyses S-sulfanyl-L-cysteinyl-[protein] + uridine(34) in tRNA + AH2 + ATP = 2-thiouridine(34) in tRNA + L-cysteinyl-[protein] + A + AMP + diphosphate + H(+). Catalyzes the 2-thiolation of uridine at the wobble position (U34) of tRNA, leading to the formation of s(2)U34. This is tRNA-specific 2-thiouridylase MnmA 1 from Clostridium tetani (strain Massachusetts / E88).